The chain runs to 106 residues: UPF0060 membrane protein Smed_0659 (106 aa).

Helical transmembrane passes span 4–24, 31–51, and 61–81; these read FAIYFLAALAEIAGCFTFWAW, GLWLLPGMASLAIFAWLLTMV, and AAYGGIYIIASLCWLWVAEGA.

This sequence belongs to the UPF0060 family.

Its subcellular location is the cell inner membrane. The chain is UPF0060 membrane protein Smed_0659 from Sinorhizobium medicae (strain WSM419) (Ensifer medicae).